We begin with the raw amino-acid sequence, 288 residues long: ATP synthase gamma chain (288 aa).

Belongs to the ATPase gamma chain family. F-type ATPases have 2 components, CF(1) - the catalytic core - and CF(0) - the membrane proton channel. CF(1) has five subunits: alpha(3), beta(3), gamma(1), delta(1), epsilon(1). CF(0) has three main subunits: a, b and c.

The protein resides in the cell inner membrane. In terms of biological role, produces ATP from ADP in the presence of a proton gradient across the membrane. The gamma chain is believed to be important in regulating ATPase activity and the flow of protons through the CF(0) complex. The polypeptide is ATP synthase gamma chain (Actinobacillus pleuropneumoniae serotype 3 (strain JL03)).